Consider the following 479-residue polypeptide: MSAILSTTSKSFLSRGSTRQCQNMQKALFALLNARHYSSASEQTLKERFAEIIPAKAEEIKKFKKEHGKTVIGEVLLEQAYGGMRGIKGLVWEGSVLDPEEGIRFRGRTIPEIQRELPKAEGSTEPLPEALFWLLLTGEIPTDAQVKALSADLAARSEIPEHVIQLLDSLPKDLHPMAQFSIAVTALESESKFAKAYAQGVSKKEYWSYTFEDSLDLLGKLPVIASKIYRNVFKDGKITSTDPNADYGKNLAQLLGYENKDFIDLMRLYLTIHSDHEGGNVSAHTTHLVGSALSSPYLSLAAGLNGLAGPLHGRANQEVLEWLFKLREEVKGDYSKETIEKYLWDTLNAGRVVPGYGHAVLRKTDPRYTAQREFALKHFPDYELFKLVSTIYEVAPGVLTKHGKTKNPWPNVDSHSGVLLQYYGLTEASFYTVLFGVARAIGVLPQLIIDRAVGAPIERPKSFSTEKYKELVKKIESKN.

A mitochondrion-targeting transit peptide spans 1 to 37 (MSAILSTTSKSFLSRGSTRQCQNMQKALFALLNARHY). Residues H312, H358, and D413 contribute to the active site. The residue at position 462 (S462) is a Phosphoserine.

Belongs to the citrate synthase family. As to quaternary structure, monomer and homodimer. Exists as an inactive monomer when phosphorylated. Homodimerization is dependent on dephosphorylation of Ser-462 by PTC7 and is required for activity. Post-translationally, phosphorylation at Ser-462. Dephosphorylated at Ser-462 by PTC7.

The protein localises to the mitochondrion matrix. The enzyme catalyses oxaloacetate + acetyl-CoA + H2O = citrate + CoA + H(+). It functions in the pathway carbohydrate metabolism; tricarboxylic acid cycle; isocitrate from oxaloacetate: step 1/2. Phosphorylation at Ser-462 inhibits catalytic activity. Dephosphorylation at Ser-462 by PTC7 enhances catalytic activity. Its function is as follows. Specific citrate synthase with catalytic activity only with acetyl-CoA. The chain is Citrate synthase, mitochondrial from Saccharomyces cerevisiae (strain ATCC 204508 / S288c) (Baker's yeast).